Consider the following 527-residue polypeptide: Tyrosine-protein kinase TXK (527 aa).

Positions 35–79 (DEELPEKYTQRRRPWLSQLSNKKQSNTGRVQPSKRKPLPPLPPSE) are disordered. A compositionally biased stretch (polar residues) spans 51 to 64 (SQLSNKKQSNTGRV). The Nuclear localization signal motif lies at 68–73 (KRKPLP). An SH3 domain is found at 82–142 (EEKIQVKALY…PSNYVTENKI (61 aa)). A Phosphotyrosine; by autocatalysis modification is found at Tyr91. One can recognise an SH2 domain in the interval 150-246 (WYHRNITRNQ…GLMTRLRYPV (97 aa)). The region spanning 271–527 (LAFIKEIGSG…RAVTEIAETW (257 aa)) is the Protein kinase domain. Residues 277-285 (IGSGQFGVV) and Lys299 contribute to the ATP site. Catalysis depends on Asp390, which acts as the Proton acceptor. Residue Tyr420 is modified to Phosphotyrosine; by FYN and autocatalysis.

Belongs to the protein kinase superfamily. Tyr protein kinase family. TEC subfamily. Interacts with PARP1 and EEF1A1. Interacts with SH2D2A. Interacts with FYN. Phosphorylated at Tyr-420 by FYN. Autophosphorylation at Tyr-91 is critical for the activation of TXK, leading to the up-regulation of IFN-gamma gene transcription. Post-translationally, the cysteine string at the N-terminus is palmitoylated and required for the proper subcellular location. Expressed in T-cells and some myeloid cell lines. Expressed in Th1/Th0 cells with IFN-gamma-producing potential.

Its subcellular location is the cytoplasm. It localises to the nucleus. The protein resides in the cell membrane. The enzyme catalyses L-tyrosyl-[protein] + ATP = O-phospho-L-tyrosyl-[protein] + ADP + H(+). Activated by phosphorylation by FYN. Its function is as follows. Non-receptor tyrosine kinase that plays a redundant role with ITK in regulation of the adaptive immune response. Regulates the development, function and differentiation of conventional T-cells and nonconventional NKT-cells. When antigen presenting cells (APC) activate T-cell receptor (TCR), a series of phosphorylation leads to the recruitment of TXK to the cell membrane, where it is phosphorylated at Tyr-420. Phosphorylation leads to TXK full activation. Also contributes to signaling from many receptors and participates in multiple downstream pathways, including regulation of the actin cytoskeleton. Like ITK, can phosphorylate PLCG1, leading to its localization in lipid rafts and activation, followed by subsequent cleavage of its substrates. In turn, the endoplasmic reticulum releases calcium in the cytoplasm and the nuclear activator of activated T-cells (NFAT) translocates into the nucleus to perform its transcriptional duty. Plays a role in the positive regulation of IFNG transcription in T-helper 1 cells as part of an IFNG promoter-binding complex with PARP1 and EEF1A1. Within the complex, phosphorylates both PARP1 and EEF1A1. Also phosphorylates key sites in LCP2 leading to the up-regulation of Th1 preferred cytokine IL-2. Phosphorylates 'Tyr-201' of CTLA4 which leads to the association of PI-3 kinase with the CTLA4 receptor. This is Tyrosine-protein kinase TXK (TXK) from Homo sapiens (Human).